We begin with the raw amino-acid sequence, 321 residues long: DNA-directed RNA polymerase subunit alpha (321 aa).

The segment at 1–235 is alpha N-terminal domain (alpha-NTD); that stretch reads MAYQIECLET…DLFSPLKEVP (235 aa). The alpha C-terminal domain (alpha-CTD) stretch occupies residues 252–321; sequence QIPIEQLNLS…TLPPQKAARN (70 aa).

Belongs to the RNA polymerase alpha chain family. Homodimer. In cyanobacteria the RNAP catalytic core is composed of 2 alpha, 1 beta, 1 beta', 1 gamma and 1 omega subunit. When a sigma factor is associated with the core the holoenzyme is formed, which can initiate transcription.

The enzyme catalyses RNA(n) + a ribonucleoside 5'-triphosphate = RNA(n+1) + diphosphate. In terms of biological role, DNA-dependent RNA polymerase catalyzes the transcription of DNA into RNA using the four ribonucleoside triphosphates as substrates. The chain is DNA-directed RNA polymerase subunit alpha from Thermosynechococcus vestitus (strain NIES-2133 / IAM M-273 / BP-1).